We begin with the raw amino-acid sequence, 286 residues long: MSATEASAGEEAASATSQAFVLPEGKVIPNTVFVGGIDITMDEMAIGNLFEKYGKVKDLKIITDRTGVSKGYGFVSFYDEVDVQKIVKSQINFHGKKLKLGPAIRKMQRICTYVQTSPVVISPPTQFHPTWNSQNADSYIQHSPIISPVTQYVQACPYPSSPPMAIQQIPVGCQQPSYFQVSPQWPTDQRNYMFPSPAFTFNYNCCEIDPNGGEPMPREYHIDQAVSASGANLQKRYVDMSTQTIISCLFDPAKKVRLFASQEDYIQDDSVHQFRRSKSVIKRVSN.

The RRM domain maps to 30–105 (NTVFVGGIDI…KKLKLGPAIR (76 aa)). Residues 155–180 (ACPYPSSPPMAIQQIPVGCQQPSYFQ) enclose the DAZ domain.

The protein belongs to the RRM DAZ family. As to quaternary structure, interacts with the C-terminus of pabp1 and with epabp. Prior to oocyte maturation, found in a complex with epabp and pum2 proteins and spdy1 mRNA; pum2 dissociates from the complex during maturation. In terms of tissue distribution, germ-line specific; expressed in adult testis and ovary. Localized specifically to the oocyte and embryonic germ plasm and to migrating primordial germ cells (PGCs).

It is found in the cytoplasm. In terms of biological role, RNA-binding protein that is required for primordial germ cell (PGC) differentiation and indirectly necessary for the migration of PGCs through the endoderm. May promote meiotic cell division during spermatogenesis. Shows a preference for G- and U-rich RNAs and probably binds the 3'-UTR of target mRNAs. Stimulates the initiation of translation of mRNAs through the recruitment of poly(A)-binding proteins (PABPs). This chain is Deleted in azoospermia-like, found in Xenopus tropicalis (Western clawed frog).